Here is a 497-residue protein sequence, read N- to C-terminus: Cobyrinate a,c-diamide synthase (497 aa).

Residues 273–478 (RIGIALDEAF…AHLHGVAYRE (206 aa)) form the GATase cobBQ-type domain. The Nucleophile role is filled by cysteine 355.

The protein belongs to the CobB/CbiA family. It depends on Mg(2+) as a cofactor.

The catalysed reaction is cob(II)yrinate + 2 L-glutamine + 2 ATP + 2 H2O = cob(II)yrinate a,c diamide + 2 L-glutamate + 2 ADP + 2 phosphate + 2 H(+). It catalyses the reaction Ni-sirohydrochlorin + 2 L-glutamine + 2 ATP + 2 H2O = Ni-sirohydrochlorin a,c-diamide + 2 L-glutamate + 2 ADP + 2 phosphate + 2 H(+). It functions in the pathway cofactor biosynthesis; adenosylcobalamin biosynthesis; cob(II)yrinate a,c-diamide from sirohydrochlorin (anaerobic route): step 10/10. Functionally, catalyzes the ATP-dependent amidation of the two carboxylate groups at positions a and c of cobyrinate, using either L-glutamine or ammonia as the nitrogen source (Potential). Involved in the biosynthesis of the unique nickel-containing tetrapyrrole coenzyme F430, the prosthetic group of methyl-coenzyme M reductase (MCR), which plays a key role in methanogenesis and anaerobic methane oxidation. Catalyzes the ATP-dependent amidation of the two carboxylate groups at positions a and c of Ni-sirohydrochlorin, using L-glutamine or ammonia as the nitrogen source. This is Cobyrinate a,c-diamide synthase from Methanosarcina acetivorans (strain ATCC 35395 / DSM 2834 / JCM 12185 / C2A).